Reading from the N-terminus, the 311-residue chain is GPN-loop GTPase 2 (311 aa).

20–25 (GSGKTT) lines the GTP pocket. A Gly-Pro-Asn (GPN)-loop; involved in dimer interface motif is present at residues 77 to 79 (GPN). 179–182 (SKMD) serves as a coordination point for GTP.

This sequence belongs to the GPN-loop GTPase family. Heterodimers with gpn1 or gpn3. Binds to RNA polymerase II (RNAPII).

Its function is as follows. Small GTPase required for proper localization of RNA polymerase II and III (RNAPII and RNAPIII). May act at an RNAP assembly step prior to nuclear import. The sequence is that of GPN-loop GTPase 2 from Danio rerio (Zebrafish).